We begin with the raw amino-acid sequence, 100 residues long: Urease subunit gamma (100 aa).

Belongs to the urease gamma subunit family. In terms of assembly, heterotrimer of UreA (gamma), UreB (beta) and UreC (alpha) subunits. Three heterotrimers associate to form the active enzyme.

Its subcellular location is the cytoplasm. The enzyme catalyses urea + 2 H2O + H(+) = hydrogencarbonate + 2 NH4(+). It participates in nitrogen metabolism; urea degradation; CO(2) and NH(3) from urea (urease route): step 1/1. This is Urease subunit gamma from Granulibacter bethesdensis (strain ATCC BAA-1260 / CGDNIH1).